Here is a 65-residue protein sequence, read N- to C-terminus: Large ribosomal subunit protein bL35 (65 aa).

Basic residues predominate over residues 1–16 (MPKMKTKSGAKKRFRV). A disordered region spans residues 1–25 (MPKMKTKSGAKKRFRVRPGGTVKRG).

It belongs to the bacterial ribosomal protein bL35 family.

This chain is Large ribosomal subunit protein bL35, found in Herminiimonas arsenicoxydans.